The primary structure comprises 228 residues: Putative adhesin RBE_1271 (228 aa).

An N-terminal signal peptide occupies residues 1 to 22; sequence MKKLLLIAATSATVLSSALSFA.

This Rickettsia bellii (strain RML369-C) protein is Putative adhesin RBE_1271.